The chain runs to 239 residues: Serine protease SplF (239 aa).

Positions 1 to 36 are cleaved as a signal peptide; the sequence is MNKNIIIKSIAALTILTSVTGVGTTMVEGIQQTAKA. Residues histidine 75, aspartate 114, and serine 192 each act as charge relay system in the active site.

Belongs to the peptidase S1B family.

The protein localises to the secreted. This chain is Serine protease SplF (splF), found in Staphylococcus aureus (strain Mu50 / ATCC 700699).